Here is a 554-residue protein sequence, read N- to C-terminus: Glucose-6-phosphate isomerase (554 aa).

E358 functions as the Proton donor in the catalytic mechanism. Active-site residues include H389 and K515.

It belongs to the GPI family.

The protein resides in the cytoplasm. It carries out the reaction alpha-D-glucose 6-phosphate = beta-D-fructose 6-phosphate. Its pathway is carbohydrate biosynthesis; gluconeogenesis. It participates in carbohydrate degradation; glycolysis; D-glyceraldehyde 3-phosphate and glycerone phosphate from D-glucose: step 2/4. Catalyzes the reversible isomerization of glucose-6-phosphate to fructose-6-phosphate. The chain is Glucose-6-phosphate isomerase from Mycobacterium leprae (strain Br4923).